A 259-amino-acid chain; its full sequence is Src-like-adapter 2 (259 aa).

The segment covering Met1–Pro20 has biased composition (low complexity). Residues Met1 to Glu30 form a disordered region. The N-myristoyl glycine moiety is linked to residue Gly2. An SH3 domain is found at Arg31 to His91. An SH2 domain is found at Trp93–Cys190. Residues Cys190–Ala259 form an SLA C-terminal region.

As to quaternary structure, interacts (via its C-terminal domain) with CBL (phosphorylated). Interacts (via SH2 domain) with ZAP70 (phosphorylated) and CD3Z (phosphorylated). Interacts (via SH2 domain) with CSF1R (phosphorylated). Post-translationally, phosphorylated by CSF1R. In terms of tissue distribution, mainly expressed in immune system. Highly expressed in spleen and thymus and expressed at intermediate levels in lung. Not expressed in liver, heart and brain. Isoform 1 is predominant in lung and spleen, while isoform 2 is predominant in thymus.

It localises to the cytoplasm. It is found in the cell membrane. Its subcellular location is the cytoplasmic vesicle. The protein resides in the late endosome. Functionally, adapter protein, which negatively regulates T-cell receptor (TCR) signaling. Inhibits T-cell antigen-receptor induced activation of nuclear factor of activated T-cells. May act by linking signaling proteins such as ZAP70 with CBL, leading to a CBL dependent degradation of signaling proteins. The sequence is that of Src-like-adapter 2 (Sla2) from Mus musculus (Mouse).